Consider the following 154-residue polypeptide: CASP-like protein 5B2 (154 aa).

Over 1–17 (MAGLAGRPGSWGGLVLR) the chain is Cytoplasmic. The chain crosses the membrane as a helical span at residues 18 to 38 (VGQALFAAACIGVMGSSLGFA). Topologically, residues 39-42 (SYTA) are extracellular. A helical membrane pass occupies residues 43-63 (FCYLIASMGLQMLWSFGLACL). The Cytoplasmic portion of the chain corresponds to 64–87 (DGYAIRANKDLTSPILLSLFVVGD). The chain crosses the membrane as a helical span at residues 88-107 (WVTAILSFAASSSAAGVVIL). Topologically, residues 108 to 130 (FQKDVLFCRRYPQLPCGKYELAT) are extracellular. A helical transmembrane segment spans residues 131–151 (AFAFLSWALSATSALIMFWLL). The Cytoplasmic portion of the chain corresponds to 152–154 (AAF).

This sequence belongs to the Casparian strip membrane proteins (CASP) family. As to quaternary structure, homodimer and heterodimers.

Its subcellular location is the cell membrane. The protein is CASP-like protein 5B2 of Zea mays (Maize).